Consider the following 337-residue polypeptide: Beta-glucosidase-like protein NCA3, mitochondrial (337 aa).

Residues glutamate 57–serine 67 show a composition bias toward low complexity. The segment at glutamate 57–glycine 84 is disordered. Basic and acidic residues predominate over residues serine 68–glycine 80.

This sequence belongs to the SUN family.

It localises to the mitochondrion. Functionally, involved in the mitochondrial expression of subunits 6 and 8 of the F0-F1 ATP synthase. This Saccharomyces cerevisiae (strain ATCC 204508 / S288c) (Baker's yeast) protein is Beta-glucosidase-like protein NCA3, mitochondrial (NCA3).